Here is a 348-residue protein sequence, read N- to C-terminus: MSPYVTMILISSLGLGTTITFTSSSWLMAWMGLEINTLAITPLMVKQHHPRATEATTKYFLTQATASGLLLFATLNNAWMTGEWNTMELSNNLSAPMITMALALKMGVAPMHFWLPEVLQGLPLLTGLILSTWQKLAPFTLLYMTSHELNTTTMTILGLTSTIIGGLGGLNQTQLRKVLAYSSIAHLGWMVIIIQYSKTLALLNLLLYITMTSTAFLTLMTLSATKINTLSTKWATTPIATMTAMLALLALGGLPPLTGFMPKWLILQELTKQNLPALATLMALSALLSLFFYLRMCHTMTLTISPNTNNNMITWRKKPGQKALPLAMLSIMTLMALPTTPTMVAIMN.

10 consecutive transmembrane segments (helical) span residues 1-21 (MSPYVTMILISSLGLGTTITF), 25-45 (SWLMAWMGLEINTLAITPLMV), 60-80 (FLTQATASGLLLFATLNNAWM), 93-115 (LSAPMITMALALKMGVAPMHFWL), 149-169 (LNTTTMTILGLTSTIIGGLGG), 177-197 (KVLAYSSIAHLGWMVIIIQYS), 200-220 (LALLNLLLYITMTSTAFLTLM), 239-259 (IATMTAMLALLALGGLPPLTG), 274-294 (NLPALATLMALSALLSLFFYL), and 326-346 (LAMLSIMTLMALPTTPTMVAI).

It belongs to the complex I subunit 2 family.

Its subcellular location is the mitochondrion inner membrane. The enzyme catalyses a ubiquinone + NADH + 5 H(+)(in) = a ubiquinol + NAD(+) + 4 H(+)(out). In terms of biological role, core subunit of the mitochondrial membrane respiratory chain NADH dehydrogenase (Complex I) that is believed to belong to the minimal assembly required for catalysis. Complex I functions in the transfer of electrons from NADH to the respiratory chain. The immediate electron acceptor for the enzyme is believed to be ubiquinone. This chain is NADH-ubiquinone oxidoreductase chain 2 (MT-ND2), found in Latimeria chalumnae (Coelacanth).